The chain runs to 169 residues: Short form salivary protein D7R3 (169 aa).

The first 21 residues, 1–21 (MFGKLLPCAILVWCLFSLGQA), serve as a signal peptide directing secretion. 3 cysteine pairs are disulfide-bonded: cysteine 30–cysteine 62, cysteine 43–cysteine 168, and cysteine 101–cysteine 120. Noradrenaline contacts are provided by glutamate 31 and arginine 46. Glutamate 31 contributes to the serotonin binding site. Positions 59, 118, 135, and 138 each coordinate serotonin. Residues tyrosine 118, aspartate 135, and glutamate 138 each coordinate histamine. Residues aspartate 135 and glutamate 138 each coordinate noradrenaline.

It belongs to the PBP/GOBP family. In terms of tissue distribution, female saliva (at protein level). Female salivary gland. Low-level expression in female carcass without salivary glands. Not detected in male tissues.

The protein localises to the secreted. Modulates blood feeding of female mosquitoes on vertebrate species by binding and sequestering different mediators involved in the host response. Binds serotonin, noradrenaline, histamine and adrenaline. Inhibits histamine-, serotonin- and noradrenaline-induced smooth muscle contraction. Exhibits vasodilating activity. The sequence is that of Short form salivary protein D7R3 from Anopheles gambiae (African malaria mosquito).